Reading from the N-terminus, the 400-residue chain is Beta-ketoadipyl-CoA thiolase (400 aa).

Cysteine 90 serves as the catalytic Acyl-thioester intermediate. Catalysis depends on proton acceptor residues histidine 356 and cysteine 386.

The protein belongs to the thiolase-like superfamily. Thiolase family.

It carries out the reaction succinyl-CoA + acetyl-CoA = 3-oxoadipyl-CoA + CoA. It functions in the pathway aromatic compound metabolism; beta-ketoadipate pathway; acetyl-CoA and succinyl-CoA from 3-oxoadipate: step 2/2. Its function is as follows. Catalyzes thiolytic cleavage of beta-ketoadipyl-CoA to succinyl-CoA and acetyl-CoA. The protein is Beta-ketoadipyl-CoA thiolase (pcaF) of Pseudomonas putida (Arthrobacter siderocapsulatus).